The sequence spans 130 residues: Protein ApaG (130 aa).

In terms of domain architecture, ApaG spans 3–127 (SAMTRSINIL…FSLDSPHAKR (125 aa)).

This chain is Protein ApaG, found in Parvibaculum lavamentivorans (strain DS-1 / DSM 13023 / NCIMB 13966).